The following is a 64-amino-acid chain: Carnocyclin-A (64 aa).

Residues 1 to 4 (MLYE) constitute a propeptide that is removed on maturation. A cross-link (cyclopeptide (Leu-Leu)) is located at residues 5-64 (LVAYGIAQGTAEKVVSLINAGLTVGSIISILGGVTVGLSGVFTAVKAAIAKQGIKKAIQL).

The protein localises to the secreted. In terms of biological role, cyclopeptide antibiotic that inhibits the growth of Gram-positive bacteria, but has no effect on the growth of Gram-negative bacteria. This chain is Carnocyclin-A, found in Carnobacterium maltaromaticum (Carnobacterium piscicola).